The following is a 391-amino-acid chain: Probable sugar efflux transporter (391 aa).

The next 12 membrane-spanning stretches (helical) occupy residues 16–36 (VFVF…PVAL), 51–71 (VGLM…PLML), 82–102 (LLFL…AWNF), 103–123 (WVLL…WSIT), 138–158 (QALG…LPLG), 171–191 (FGVI…LLPP), 210–230 (PLLM…FTTY), 247–267 (ITTL…FLFG), 277–297 (FIAF…VFKN), 300–320 (WVIF…TIAL), 338–358 (IFSG…SIVI), and 361–381 (LGLG…LFWL).

It belongs to the major facilitator superfamily. SotB (TC 2.A.1.2) family.

The protein resides in the cell inner membrane. Its function is as follows. Involved in the efflux of sugars. The physiological role may be the reduction of the intracellular concentration of toxic sugars or sugar metabolites. In Helicobacter pylori (strain G27), this protein is Probable sugar efflux transporter.